Reading from the N-terminus, the 495-residue chain is Probable cytosol aminopeptidase (495 aa).

2 residues coordinate Mn(2+): K258 and D263. Residue K270 is part of the active site. Residues D281, D340, and E342 each coordinate Mn(2+). R344 is a catalytic residue.

This sequence belongs to the peptidase M17 family. It depends on Mn(2+) as a cofactor.

It localises to the cytoplasm. It carries out the reaction Release of an N-terminal amino acid, Xaa-|-Yaa-, in which Xaa is preferably Leu, but may be other amino acids including Pro although not Arg or Lys, and Yaa may be Pro. Amino acid amides and methyl esters are also readily hydrolyzed, but rates on arylamides are exceedingly low.. The catalysed reaction is Release of an N-terminal amino acid, preferentially leucine, but not glutamic or aspartic acids.. Functionally, presumably involved in the processing and regular turnover of intracellular proteins. Catalyzes the removal of unsubstituted N-terminal amino acids from various peptides. This Leptospira interrogans serogroup Icterohaemorrhagiae serovar Lai (strain 56601) protein is Probable cytosol aminopeptidase.